Reading from the N-terminus, the 309-residue chain is Porphobilinogen deaminase (309 aa).

Residue C234 is modified to S-(dipyrrolylmethanemethyl)cysteine.

It belongs to the HMBS family. In terms of assembly, monomer. It depends on dipyrromethane as a cofactor.

It catalyses the reaction 4 porphobilinogen + H2O = hydroxymethylbilane + 4 NH4(+). It participates in porphyrin-containing compound metabolism; protoporphyrin-IX biosynthesis; coproporphyrinogen-III from 5-aminolevulinate: step 2/4. Tetrapolymerization of the monopyrrole PBG into the hydroxymethylbilane pre-uroporphyrinogen in several discrete steps. This is Porphobilinogen deaminase (hemC) from Mycobacterium bovis (strain ATCC BAA-935 / AF2122/97).